The sequence spans 331 residues: Beta-hexosaminidase (331 aa).

Residues Asp60, Arg68, Arg133, and 163–164 (KH) each bind substrate. Residue His176 is the Proton donor/acceptor of the active site. Asp247 serves as the catalytic Nucleophile.

The protein belongs to the glycosyl hydrolase 3 family. NagZ subfamily.

Its subcellular location is the cytoplasm. It carries out the reaction Hydrolysis of terminal non-reducing N-acetyl-D-hexosamine residues in N-acetyl-beta-D-hexosaminides.. It functions in the pathway cell wall biogenesis; peptidoglycan recycling. Functionally, plays a role in peptidoglycan recycling by cleaving the terminal beta-1,4-linked N-acetylglucosamine (GlcNAc) from peptide-linked peptidoglycan fragments, giving rise to free GlcNAc, anhydro-N-acetylmuramic acid and anhydro-N-acetylmuramic acid-linked peptides. This chain is Beta-hexosaminidase, found in Xanthomonas campestris pv. campestris (strain B100).